The primary structure comprises 258 residues: UPF0328 protein ECU02_0090 (258 aa).

It belongs to the UPF0328 family.

This chain is UPF0328 protein ECU02_0090, found in Encephalitozoon cuniculi (strain GB-M1) (Microsporidian parasite).